The chain runs to 1668 residues: Zinc finger CCCH domain-containing protein 13 (1668 aa).

Disordered stretches follow at residues 1 to 38 (MSKIRRKVTVENTKTISDSTSRRPSVFERLGPSTGSTA) and 56 to 157 (TCRF…GDIN). Positions 10 to 23 (VENTKTISDSTSRR) are enriched in polar residues. The C3H1-type zinc finger occupies 36–64 (STAETQCRNWLKTGNCLYGNTCRFVHGPS). Serine 64 and serine 77 each carry phosphoserine. The segment covering 76–136 (RSPERPTGDL…IKITKERTPE (61 aa)) has biased composition (basic and acidic residues). Residues lysine 179 and lysine 194 each participate in a glycyl lysine isopeptide (Lys-Gly) (interchain with G-Cter in SUMO2) cross-link. Disordered regions lie at residues 190–1112 (EIII…TATA) and 1125–1466 (AAAT…PISD). Phosphoserine occurs at positions 198, 207, 209, and 211. The span at 204–213 (SKLSPSPSLR) shows a compositional bias: low complexity. Residues 214 to 224 (KSSKSPKRKSS) show a composition bias toward basic residues. A Phosphothreonine modification is found at threonine 237. 2 positions are modified to phosphoserine: serine 238 and serine 242. Positions 239–254 (AVSSPLLDQQRNSKTN) are enriched in polar residues. Threonine 263 carries the post-translational modification Phosphothreonine. Phosphoserine is present on serine 265. Over residues 283–315 (KYKVKDRIEEKTRDGKDRGRDFERQREKRDKPR) the composition is skewed to basic and acidic residues. Serine 316, serine 318, serine 325, and serine 328 each carry phosphoserine. Residues 323–346 (HHSPISSRHHSSSSQSGSSIQRHS) show a composition bias toward low complexity. Phosphothreonine occurs at positions 354 and 364. 3 positions are modified to phosphoserine: serine 370, serine 372, and serine 381. Over residues 370-382 (SASPYPSHSLSSP) the composition is skewed to low complexity. Basic and acidic residues-rich tracts occupy residues 394 to 434 (PMRE…REER) and 442 to 575 (SSRD…EKGS). Over residues 584 to 593 (DSHSSNSNYH) the composition is skewed to low complexity. Positions 594 to 640 (DSWETRSSYPERDRYPERDNRDQARDSSFERRHGERDRRDNRERDQR) are enriched in basic and acidic residues. A Phosphoserine modification is found at serine 643. Residues 645 to 789 (IRHQGRNDEL…RDKERERQRD (145 aa)) adopt a coiled-coil conformation. Positions 649–821 (GRNDELERDE…NPRDGHDERK (173 aa)) are enriched in basic and acidic residues. Phosphoserine is present on residues serine 831, serine 833, serine 837, serine 845, serine 848, serine 853, serine 873, serine 875, and serine 877. Over residues 881-957 (LTEDRQGRWK…TSDRAHDENK (77 aa)) the composition is skewed to basic and acidic residues. Residue threonine 882 is modified to Phosphothreonine. Serine 943 is subject to Phosphoserine. Over residues 958–969 (KKAKIQKKPIKK) the composition is skewed to basic residues. Over residues 970-981 (KKEDDVGIERGN) the composition is skewed to basic and acidic residues. Serine 986, serine 993, serine 1010, serine 1014, and serine 1017 each carry phosphoserine. Positions 996 to 1010 (KGQKKKSIEKKRKKS) are enriched in basic residues. At threonine 1033 the chain carries Phosphothreonine. The segment covering 1073-1083 (PDRTEVTEAEH) has biased composition (basic and acidic residues). Composition is skewed to low complexity over residues 1084-1100 (TATATTPGSTPSPLSSL) and 1125-1153 (AAATSFSTSAITISTSATPTNTTNNTFAN). Positions 1163–1188 (TRVEKVETPHVTIEDAQHRKPMDQKR) are enriched in basic and acidic residues. Threonine 1170 is subject to Phosphothreonine. Serine 1191, serine 1194, serine 1208, and serine 1210 each carry phosphoserine. A compositionally biased stretch (basic and acidic residues) spans 1213 to 1223 (SAHRSGDDQSG). Serine 1230 is subject to Phosphoserine. Composition is skewed to basic and acidic residues over residues 1231–1286 (GSRD…DRQV) and 1294–1379 (DSRD…DRTF). A coiled-coil region spans residues 1300–1366 (QERDRYEHDR…RERERLISDS (67 aa)). A phosphoserine mark is found at serine 1364, serine 1366, serine 1382, serine 1386, serine 1406, serine 1409, serine 1438, leucine 1453, glycine 1456, serine 1465, and aspartate 1466. Basic and acidic residues-rich tracts occupy residues 1386–1421 (SVKRCEAKLEGEHERDLESTSRDSLALDKERMDKDL) and 1429–1438 (ETNKSERTES).

Belongs to the ZC3H13 family. As to quaternary structure, component of the WMM complex, a N6-methyltransferase complex composed of a catalytic subcomplex, named MAC, and of an associated subcomplex, named MACOM. The MAC subcomplex is composed of METTL3 and METTL14. The MACOM subcomplex is composed of WTAP, ZC3H13, CBLL1/HAKAI, VIRMA, and, in some cases of RBM15 (RBM15 or RBM15B). Also a component of a MACOM-like complex, named WTAP complex, composed of WTAP, ZC3H13, CBLL1/HAKAI, VIRMA, RBM15, BCLAF1 and THRAP3.

The protein localises to the nucleus speckle. It localises to the nucleus. It is found in the nucleoplasm. In terms of biological role, associated component of the WMM complex, a complex that mediates N6-methyladenosine (m6A) methylation of RNAs, a modification that plays a role in the efficiency of mRNA splicing and RNA processing. Acts as a key regulator of m6A methylation by promoting m6A methylation of mRNAs at the 3'-UTR. Controls embryonic stem cells (ESCs) pluripotency via its role in m6A methylation. In the WMM complex, anchors component of the MACOM subcomplex in the nucleus. Also required for bridging WTAP to the RNA-binding component RBM15 (RBM15 or RBM15B). This Homo sapiens (Human) protein is Zinc finger CCCH domain-containing protein 13.